A 173-amino-acid chain; its full sequence is Probable chemoreceptor glutamine deamidase CheD 2 (173 aa).

This sequence belongs to the CheD family.

The catalysed reaction is L-glutaminyl-[protein] + H2O = L-glutamyl-[protein] + NH4(+). In terms of biological role, probably deamidates glutamine residues to glutamate on methyl-accepting chemotaxis receptors (MCPs), playing an important role in chemotaxis. This chain is Probable chemoreceptor glutamine deamidase CheD 2, found in Albidiferax ferrireducens (strain ATCC BAA-621 / DSM 15236 / T118) (Rhodoferax ferrireducens).